We begin with the raw amino-acid sequence, 249 residues long: Phosphate import ATP-binding protein PstB (249 aa).

Residues 4–244 (IQTKDLNLYY…PKDKRTEDYI (241 aa)) form the ABC transporter domain. 36 to 43 (GPSGCGKS) lines the ATP pocket.

Belongs to the ABC transporter superfamily. Phosphate importer (TC 3.A.1.7) family. As to quaternary structure, the complex is composed of two ATP-binding proteins (PstB), two transmembrane proteins (PstC and PstA) and a solute-binding protein (PstS).

It localises to the cell membrane. The enzyme catalyses phosphate(out) + ATP + H2O = ADP + 2 phosphate(in) + H(+). Its function is as follows. Part of the ABC transporter complex PstSACB involved in phosphate import. Responsible for energy coupling to the transport system. The protein is Phosphate import ATP-binding protein PstB of Clostridium acetobutylicum (strain ATCC 824 / DSM 792 / JCM 1419 / IAM 19013 / LMG 5710 / NBRC 13948 / NRRL B-527 / VKM B-1787 / 2291 / W).